Consider the following 64-residue polypeptide: uncharacterized protein (64 aa).

The protein resides in the host cytoplasm. This is an uncharacterized protein from Enterobacteriaceae (Bacteriophage Mu).